Here is a 159-residue protein sequence, read N- to C-terminus: RNA pyrophosphohydrolase (159 aa).

Residues Gly-6–Lys-149 form the Nudix hydrolase domain. The Nudix box motif lies at Gly-38–Gly-59.

The protein belongs to the Nudix hydrolase family. RppH subfamily. A divalent metal cation serves as cofactor.

Functionally, accelerates the degradation of transcripts by removing pyrophosphate from the 5'-end of triphosphorylated RNA, leading to a more labile monophosphorylated state that can stimulate subsequent ribonuclease cleavage. The polypeptide is RNA pyrophosphohydrolase (Baumannia cicadellinicola subsp. Homalodisca coagulata).